Here is a 134-residue protein sequence, read N- to C-terminus: Profilin-3 (134 aa).

The cysteines at positions 13 and 118 are disulfide-linked. Positions 84-100 (AVIRGKKGSGGITIKKT) match the Involved in PIP2 interaction motif. Thr-114 carries the phosphothreonine modification.

This sequence belongs to the profilin family. Occurs in many kinds of cells as a complex with monomeric actin in a 1:1 ratio. Post-translationally, phosphorylated by MAP kinases.

The protein localises to the cytoplasm. It is found in the cytoskeleton. In terms of biological role, binds to actin and affects the structure of the cytoskeleton. At high concentrations, profilin prevents the polymerization of actin, whereas it enhances it at low concentrations. The protein is Profilin-3 of Olea europaea (Common olive).